The primary structure comprises 185 residues: Guanylate kinase (185 aa).

The Guanylate kinase-like domain maps to 4 to 181 (GALYVVSGPS…ACNDLISIIE (178 aa)). An ATP-binding site is contributed by 11-18 (GPSGAGKS).

This sequence belongs to the guanylate kinase family.

Its subcellular location is the cytoplasm. It carries out the reaction GMP + ATP = GDP + ADP. Essential for recycling GMP and indirectly, cGMP. In Fusobacterium nucleatum subsp. nucleatum (strain ATCC 25586 / DSM 15643 / BCRC 10681 / CIP 101130 / JCM 8532 / KCTC 2640 / LMG 13131 / VPI 4355), this protein is Guanylate kinase.